We begin with the raw amino-acid sequence, 219 residues long: Protein-L-isoaspartate O-methyltransferase 2 (219 aa).

The active site involves S60.

Belongs to the methyltransferase superfamily. L-isoaspartyl/D-aspartyl protein methyltransferase family.

The protein resides in the cytoplasm. It carries out the reaction [protein]-L-isoaspartate + S-adenosyl-L-methionine = [protein]-L-isoaspartate alpha-methyl ester + S-adenosyl-L-homocysteine. In terms of biological role, catalyzes the methyl esterification of L-isoaspartyl residues in peptides and proteins that result from spontaneous decomposition of normal L-aspartyl and L-asparaginyl residues. It plays a role in the repair and/or degradation of damaged proteins. The protein is Protein-L-isoaspartate O-methyltransferase 2 (pcm2) of Archaeoglobus fulgidus (strain ATCC 49558 / DSM 4304 / JCM 9628 / NBRC 100126 / VC-16).